Consider the following 646-residue polypeptide: Nucleoside triphosphatase I (646 aa).

Residues 48 to 213 (FIGLKNLNSM…NNLIGLLRPN (166 aa)) enclose the Helicase ATP-binding domain. 61-68 (WDTGMGKT) is an ATP binding site. Residues 151-154 (DEVH) carry the DEXH box motif. The Helicase C-terminal domain occupies 377 to 540 (YIEACRIILN…KINVVFDLLK (164 aa)). Positions 466–532 (DIIILDMPWN…DIIKDKQSKI (67 aa)) are binding to the cap-specific mRNA (nucleoside-2'-O-)-methyltransferase.

It belongs to the helicase family. NPH I subfamily. In terms of assembly, monomer. Interacts (via C-terminus) with RAP94 (via N-terminus). Interacts with the cap-specific mRNA (nucleoside-2'-O-)-methyltransferase.

Its subcellular location is the virion. The enzyme catalyses a ribonucleoside 5'-triphosphate + H2O = a ribonucleoside 5'-diphosphate + phosphate + H(+). DNA-dependent ATPase required for providing the needed energy to achieve the termination of early transcripts. Acts in concert with the RAP94 subunit of the virion RNA polymerase and the capping enzyme/VTF to catalyze release of UUUUUNU-containing nascent RNA from the elongation complex. NPH-I must bind ssDNA in order to exhibit ATPase activity. The sequence is that of Nucleoside triphosphatase I (NPH1) from Heliothis armigera entomopoxvirus (HaEPV).